The sequence spans 238 residues: Sugar fermentation stimulation protein homolog (238 aa).

Belongs to the SfsA family.

The sequence is that of Sugar fermentation stimulation protein homolog from Haemophilus influenzae (strain 86-028NP).